An 886-amino-acid polypeptide reads, in one-letter code: Semaphorin-6B (886 aa).

A signal peptide spans 1-26 (MWTPRVPPPRPALSFFLLLLLGVTYG). Topologically, residues 27–605 (LFPEEPPPLS…VSVNLLVTSS (579 aa)) are extracellular. The Sema domain maps to 32–525 (PPPLSVAPRD…FPRCVVRVPV (494 aa)). An N-linked (GlcNAc...) asparagine glycan is attached at N75. Cystine bridges form between C117-C127 and C145-C154. N-linked (GlcNAc...) asparagine glycans are attached at residues N156 and N292. Cystine bridges form between C268–C379 and C293–C338. N-linked (GlcNAc...) asparagine glycosylation is found at N387, N442, and N463. Disulfide bonds link C487-C519, C528-C546, C534-C580, and C538-C554. A helical transmembrane segment spans residues 606-626 (VAAFVVGAVVSGFSVGWFVGL). Residues 627–886 (RERRELARRK…TGERTAPPVP (260 aa)) lie on the Cytoplasmic side of the membrane. Disordered stretches follow at residues 655-677 (RLGE…PGGP), 697-731 (HGGP…AHAL), and 761-886 (EQPQ…PPVP). Positions 662-674 (TGPGGRGGAGGGP) are enriched in gly residues. R667 is modified (omega-N-methylarginine). A compositionally biased stretch (low complexity) spans 707–718 (LLPTPEQTPLPQ).

Belongs to the semaphorin family. Homodimer. Binds specifically the SH3 domain of the protooncogene C-SRC. In terms of tissue distribution, in adulthood, it is expressed ubiquitously.

It localises to the cell membrane. In terms of biological role, functions as a cell surface repellent for mossy fibers of developing neurons in the hippocampus where it plays a role in axon guidance. May function through the PLXNA4 receptor expressed by mossy cell axons. In Mus musculus (Mouse), this protein is Semaphorin-6B (Sema6b).